A 379-amino-acid chain; its full sequence is uncharacterized protein (379 aa).

3 disordered regions span residues 1 to 20, 227 to 290, and 331 to 371; these read MLPQ…PVGP, VSQR…LQGH, and PGCA…RAGH. A compositionally biased stretch (low complexity) spans 7 to 20; that stretch reads QVVHGVQDGPPVGP. Basic and acidic residues predominate over residues 249-261; that stretch reads GCKDPRVRKEPGR.

This is an uncharacterized protein from Dryophytes versicolor (chameleon treefrog).